A 274-amino-acid chain; its full sequence is MPLNLKYFVPEQRYIILKTKGGGLVSTDREDLEMRVRDVLIKYLGKNVYDSDPRARQIIDTLSRNYRDVESWIRDSEFVMRSRAILKYYPHGDPYEEVKVIKTHNEATCFPIATLAYFIVTANCPTGCCGCGCHAGCNGSVGHAPYLMVGSDTSTLTYCLMPNLAQGYTQSPSATSYYWATGVLGSSPGSGGQVYAVVTSTWNAGVLPSGTIGEVGAFQFMINQLANSVDYGTGVPNQGYVMYARVSSASGAFSPISYTNTAPFTASITLYMAV.

This is an uncharacterized protein from Acidianus hospitalis (AFV-1).